The following is a 514-amino-acid chain: Bifunctional purine biosynthesis protein PurH (514 aa).

Residues 1–145 (MIKRALISVS…KNYQDVVVIV (145 aa)) enclose the MGS-like domain.

Belongs to the PurH family.

It carries out the reaction (6R)-10-formyltetrahydrofolate + 5-amino-1-(5-phospho-beta-D-ribosyl)imidazole-4-carboxamide = 5-formamido-1-(5-phospho-D-ribosyl)imidazole-4-carboxamide + (6S)-5,6,7,8-tetrahydrofolate. The enzyme catalyses IMP + H2O = 5-formamido-1-(5-phospho-D-ribosyl)imidazole-4-carboxamide. It functions in the pathway purine metabolism; IMP biosynthesis via de novo pathway; 5-formamido-1-(5-phospho-D-ribosyl)imidazole-4-carboxamide from 5-amino-1-(5-phospho-D-ribosyl)imidazole-4-carboxamide (10-formyl THF route): step 1/1. Its pathway is purine metabolism; IMP biosynthesis via de novo pathway; IMP from 5-formamido-1-(5-phospho-D-ribosyl)imidazole-4-carboxamide: step 1/1. This is Bifunctional purine biosynthesis protein PurH from Acetivibrio thermocellus (strain ATCC 27405 / DSM 1237 / JCM 9322 / NBRC 103400 / NCIMB 10682 / NRRL B-4536 / VPI 7372) (Clostridium thermocellum).